We begin with the raw amino-acid sequence, 348 residues long: Phenylalanine--tRNA ligase alpha subunit (348 aa).

Glu259 lines the Mg(2+) pocket.

Belongs to the class-II aminoacyl-tRNA synthetase family. Phe-tRNA synthetase alpha subunit type 1 subfamily. As to quaternary structure, tetramer of two alpha and two beta subunits. Requires Mg(2+) as cofactor.

It localises to the cytoplasm. It catalyses the reaction tRNA(Phe) + L-phenylalanine + ATP = L-phenylalanyl-tRNA(Phe) + AMP + diphosphate + H(+). This chain is Phenylalanine--tRNA ligase alpha subunit, found in Limosilactobacillus reuteri (strain DSM 20016) (Lactobacillus reuteri).